The sequence spans 645 residues: 1-deoxy-D-xylulose-5-phosphate synthase 1 (645 aa).

Residues 1–20 (MTDTKTPTLDRVAGPADLRS) are disordered. Thiamine diphosphate contacts are provided by residues histidine 78 and 119–121 (AHS). Aspartate 150 is a binding site for Mg(2+). Residues 151–152 (GS), asparagine 179, tyrosine 291, and glutamate 373 each bind thiamine diphosphate. A Mg(2+)-binding site is contributed by asparagine 179.

It belongs to the transketolase family. DXPS subfamily. As to quaternary structure, homodimer. The cofactor is Mg(2+). Requires thiamine diphosphate as cofactor.

It catalyses the reaction D-glyceraldehyde 3-phosphate + pyruvate + H(+) = 1-deoxy-D-xylulose 5-phosphate + CO2. The protein operates within metabolic intermediate biosynthesis; 1-deoxy-D-xylulose 5-phosphate biosynthesis; 1-deoxy-D-xylulose 5-phosphate from D-glyceraldehyde 3-phosphate and pyruvate: step 1/1. Its function is as follows. Catalyzes the acyloin condensation reaction between C atoms 2 and 3 of pyruvate and glyceraldehyde 3-phosphate to yield 1-deoxy-D-xylulose-5-phosphate (DXP). The chain is 1-deoxy-D-xylulose-5-phosphate synthase 1 from Roseobacter denitrificans (strain ATCC 33942 / OCh 114) (Erythrobacter sp. (strain OCh 114)).